Here is a 421-residue protein sequence, read N- to C-terminus: EGFR adapter protein (421 aa).

Disordered stretches follow at residues Thr18 to Gln94, Asp109 to Asp154, Glu173 to Gly194, and Pro372 to Thr396. Low complexity predominate over residues Ser21–Ser30. Positions Phe62–Pro89 are enriched in basic residues. Basic and acidic residues predominate over residues Asp109–His120. Low complexity predominate over residues Ser181–Gly194. An SH2 domain is found at Trp286–Arg379.

May interact (via SH2 domain) with Egfr (when phosphorylated). In terms of tissue distribution, detected along the wing margin, with high levels of expression in two stripes of cells on either side of the dorsal/ventral boundary and lower levels of expression in a small region at the anteroposterior boundary (at protein level). High levels of expression along two parallel stripes of cells on either side of the wing pouch dorsal/ventral boundary, and slightly lower levels of expression in a region either side of the anteroposterior boundary. Also expressed in discrete regions of the wing imaginal disk outside of the pouch. Expressed in eye imaginal disk photoreceptors with highest levels of expression in R7 photoreceptor cells.

Involved in the negative regulation of the Egfr/Ras signaling pathway. During wing morphogenesis, may function redundantly with PVRAP to inhibit Egfr activity and prevent uncontrolled cell growth. The chain is EGFR adapter protein from Drosophila melanogaster (Fruit fly).